The following is a 200-amino-acid chain: Pyridoxal 5'-phosphate synthase subunit PdxT (200 aa).

52-54 contacts L-glutamine; the sequence is GES. Cys84 functions as the Nucleophile in the catalytic mechanism. L-glutamine is bound by residues Arg116 and 145–146; that span reads IR. Active-site charge relay system residues include His181 and Glu183.

Belongs to the glutaminase PdxT/SNO family. In the presence of PdxS, forms a dodecamer of heterodimers. Only shows activity in the heterodimer.

It catalyses the reaction aldehydo-D-ribose 5-phosphate + D-glyceraldehyde 3-phosphate + L-glutamine = pyridoxal 5'-phosphate + L-glutamate + phosphate + 3 H2O + H(+). The catalysed reaction is L-glutamine + H2O = L-glutamate + NH4(+). The protein operates within cofactor biosynthesis; pyridoxal 5'-phosphate biosynthesis. In terms of biological role, catalyzes the hydrolysis of glutamine to glutamate and ammonia as part of the biosynthesis of pyridoxal 5'-phosphate. The resulting ammonia molecule is channeled to the active site of PdxS. In Sulfolobus acidocaldarius (strain ATCC 33909 / DSM 639 / JCM 8929 / NBRC 15157 / NCIMB 11770), this protein is Pyridoxal 5'-phosphate synthase subunit PdxT.